We begin with the raw amino-acid sequence, 512 residues long: Kelch repeat protein C2 (512 aa).

The BTB domain occupies 2–67; that stretch reads ESVIFSINGE…MRWKKINITI (66 aa). The BACK domain maps to 102 to 176; that stretch reads CIRMFNFSKR…LLKWIHKNPN (75 aa). Kelch repeat units follow at residues 216-261, 262-307, 309-354, 356-403, 405-449, and 452-498; these read IKHN…LHNC, LYII…VNDG, LYVI…FVND, IYVM…EYDG, IYAI…SCGD, and LIIA…THKS.

The protein belongs to the poxviruses Kelch family.

The chain is Kelch repeat protein C2 from Bos taurus (Bovine).